We begin with the raw amino-acid sequence, 619 residues long: Grainyhead-like protein 2 homolog (619 aa).

The interval 1–90 (MSQETDNKRL…KINEGHEDQD (90 aa)) is transcription activation. Disordered regions lie at residues 86-108 (HEDQDKRNCLPANETPSNLSTGE), 125-147 (NDTVESSNREKYTTSLSESPQPA), and 423-444 (EERKQNRKKGKSQAAQAQCNNS). The segment covering 99–108 (ETPSNLSTGE) has biased composition (polar residues). Residues 239 to 477 (ASSTFQYTLE…DLDVQPVLFI (239 aa)) form the Grh/CP2 DB domain.

The protein belongs to the grh/CP2 family. Grainyhead subfamily.

It is found in the nucleus. The protein resides in the membrane. In terms of biological role, transcription factor playing an important role in primary neurulation and in epithelial development. Binds directly to the consensus DNA sequence 5'-AACCGGTT-3' acting as an activator and repressor on distinct target genes. This chain is Grainyhead-like protein 2 homolog (grhl2), found in Xenopus tropicalis (Western clawed frog).